A 264-amino-acid chain; its full sequence is S-methyl-5'-thioadenosine phosphorylase (264 aa).

Phosphate-binding positions include Ser-14 and Arg-55–His-56. Residue Met-180 participates in substrate binding. Residue Thr-181 participates in phosphate binding. Position 204-206 (Asp-204–Asp-206) interacts with substrate.

The protein belongs to the PNP/MTAP phosphorylase family. MTAP subfamily. In terms of assembly, homodimer.

It catalyses the reaction S-methyl-5'-thioadenosine + phosphate = 5-(methylsulfanyl)-alpha-D-ribose 1-phosphate + adenine. It participates in amino-acid biosynthesis; L-methionine biosynthesis via salvage pathway; S-methyl-5-thio-alpha-D-ribose 1-phosphate from S-methyl-5'-thioadenosine (phosphorylase route): step 1/1. With respect to regulation, not inhibited by adenosine, potently inhibited by MT-DADMe-immucillin A. In terms of biological role, catalyzes the reversible phosphorylation of S-methyl-5'-thioadenosine (MTA) to adenine and 5-methylthioribose-1-phosphate. Involved in the breakdown of MTA, a major by-product of polyamine biosynthesis. Responsible for the first step in the methionine salvage pathway after MTA has been generated from S-adenosylmethionine. Prefers MTA, with 2% activity on adenosine, 0.8% activity on S-adenosyl-L-homocysteine and no activity on other tested nucleosides. The polypeptide is S-methyl-5'-thioadenosine phosphorylase (Mycobacterium tuberculosis (strain ATCC 25618 / H37Rv)).